The following is a 1390-amino-acid chain: DNA-directed RNA polymerase subunit beta (1390 aa).

The protein belongs to the RNA polymerase beta chain family. The RNAP catalytic core consists of 2 alpha, 1 beta, 1 beta' and 1 omega subunit. When a sigma factor is associated with the core the holoenzyme is formed, which can initiate transcription.

The enzyme catalyses RNA(n) + a ribonucleoside 5'-triphosphate = RNA(n+1) + diphosphate. DNA-dependent RNA polymerase catalyzes the transcription of DNA into RNA using the four ribonucleoside triphosphates as substrates. The sequence is that of DNA-directed RNA polymerase subunit beta from Chromobacterium violaceum (strain ATCC 12472 / DSM 30191 / JCM 1249 / CCUG 213 / NBRC 12614 / NCIMB 9131 / NCTC 9757 / MK).